Consider the following 312-residue polypeptide: Gamma-soluble NSF attachment protein (312 aa).

The interval 281–312 (KKKSPATPQAKPDGAAGMAAEEEEDEYSGGLC) is disordered. Ser284 is subject to Phosphoserine. A Phosphothreonine modification is found at Thr287. Positions 300-312 (AEEEEDEYSGGLC) are enriched in acidic residues. Position 308 is a phosphoserine (Ser308).

It belongs to the SNAP family. As to quaternary structure, interacts with RAB11FIP5. Interacts with VTI1A. Abundantly expressed in the heart, liver and kidneys with lower expression in the brain, spleen, lung, muscle and testes.

The protein localises to the membrane. Its subcellular location is the golgi apparatus. In terms of biological role, required for vesicular transport between the endoplasmic reticulum and the Golgi apparatus. The polypeptide is Gamma-soluble NSF attachment protein (Mus musculus (Mouse)).